The sequence spans 251 residues: UDP-Glc:alpha-D-GlcNAc-diphosphoundecaprenol beta-1,3-glucosyltransferase WfaP (251 aa).

This sequence belongs to the glycosyltransferase 2 family. It depends on Mn(2+) as a cofactor. Requires Mg(2+) as cofactor.

The protein localises to the cell inner membrane. The enzyme catalyses N-acetyl-alpha-D-glucosaminyl-di-trans,octa-cis-undecaprenyl diphosphate + UDP-alpha-D-glucose = beta-D-Glc-(1-&gt;3)-alpha-D-GlcNAc-di-trans,octa-cis-undecaprenyl diphosphate + UDP + H(+). It participates in bacterial outer membrane biogenesis; lipopolysaccharide biosynthesis. Its function is as follows. Catalyzes the addition of Glc, the second sugar moiety of the O56-antigen repeating unit, to GlcNAc-pyrophosphate-undecaprenol. The protein is UDP-Glc:alpha-D-GlcNAc-diphosphoundecaprenol beta-1,3-glucosyltransferase WfaP (wfaP) of Escherichia coli.